The chain runs to 592 residues: MRSHYCGDVNKSHVGQEVTLVGWVNRSRDLGGVVFLDLRDREGLIQVVYDPDLPEVFNVASTLRAEFCVQVKGLVRARPDSQVNGQMKTGEIEVLGQALTIINAADPLPLSMDNYQNNSEEQRLKYRYLDLRRPEMAQRLIFRAKVTSSVRRFLDSNGFLDIETPILTKATPEGARDYLVPSRTYKGQFFALPQSPQLFKQLLMMSGFDRYYQIVKCFRDEDLRADRQPEFTQIDIETSFMSSEQVMAKTEEMMRGLFLEMLNVDLGEFPRMTYNEAMRRFGSDKPDLRNPLELVDIADLLKEVEFAVFSGPANDEEGRVAALRIPGGAALSRKQIDDYTKFVGIYGAKGLAWMKINDLSLGLEGIQSPVLKFLNESIVNEIVSRTAAQTGDIILFGADQATVVAESMGALRLKAGEDFNLLQGEWRPLWVVDFPMFEKINGNFHAVHHPFTAPRGVTAAELEANPANRVSDAYDMVLNGCELGGGSVRIHNQEMQSAVFRILGITDEEAKEKFGFLLEALRYGTPPHAGLAFGLDRIIMLMTGASSIRDVMAFPKTTTAACPLTNAPGFANPQQLAELGIAVVEKAVKTED.

E173 is a binding site for L-aspartate. The segment at Q197–K200 is aspartate. R219 is a binding site for L-aspartate. Residues R219 to E221 and Q228 contribute to the ATP site. Position 448 (H448) interacts with L-aspartate. E482 serves as a coordination point for ATP. R489 contributes to the L-aspartate binding site. Residue G534–R537 participates in ATP binding.

Belongs to the class-II aminoacyl-tRNA synthetase family. Type 1 subfamily. Homodimer.

Its subcellular location is the cytoplasm. It carries out the reaction tRNA(Asp) + L-aspartate + ATP = L-aspartyl-tRNA(Asp) + AMP + diphosphate. Functionally, catalyzes the attachment of L-aspartate to tRNA(Asp) in a two-step reaction: L-aspartate is first activated by ATP to form Asp-AMP and then transferred to the acceptor end of tRNA(Asp). In Shewanella baltica (strain OS195), this protein is Aspartate--tRNA ligase.